Here is a 217-residue protein sequence, read N- to C-terminus: Adenylate kinase (217 aa).

10-15 lines the ATP pocket; that stretch reads GAGKGT. The interval 30-59 is NMP; it reads STGDIFRKNISDKTPLGIEAKEYLDKGQLV. Residues threonine 31, arginine 36, 57-59, 85-88, and glutamine 92 each bind AMP; these read QLV and GFPR. The interval 126–163 is LID; that stretch reads GRRICPSCGASYHVKFNPPKLKDKCDICNNDIIQRKDD. ATP is bound at residue arginine 127. Zn(2+)-binding residues include cysteine 130 and cysteine 133. Residue 136-137 coordinates ATP; the sequence is SY. Zn(2+) is bound by residues cysteine 150 and cysteine 153. AMP-binding residues include arginine 160 and arginine 171. Glycine 199 provides a ligand contact to ATP.

It belongs to the adenylate kinase family. In terms of assembly, monomer.

Its subcellular location is the cytoplasm. The enzyme catalyses AMP + ATP = 2 ADP. It participates in purine metabolism; AMP biosynthesis via salvage pathway; AMP from ADP: step 1/1. Catalyzes the reversible transfer of the terminal phosphate group between ATP and AMP. Plays an important role in cellular energy homeostasis and in adenine nucleotide metabolism. The chain is Adenylate kinase from Clostridium kluyveri (strain NBRC 12016).